The primary structure comprises 367 residues: Gibberellin 20 oxidase 3 (367 aa).

Positions 198–304 constitute a Fe2OG dioxygenase domain; sequence DGDPVMRLNH…RRSLTFFLNP (107 aa). Tyrosine 208 provides a ligand contact to 2-oxoglutarate. Histidine 223, aspartate 225, and histidine 285 together coordinate Fe cation. Residues arginine 295 and serine 297 each coordinate 2-oxoglutarate.

The protein belongs to the iron/ascorbate-dependent oxidoreductase family. Fe(2+) is required as a cofactor. L-ascorbate serves as cofactor.

It catalyses the reaction gibberellin A12 + 2 2-oxoglutarate + 3 O2 + H(+) = gibberellin A9 + 2 succinate + 3 CO2 + 2 H2O. The catalysed reaction is gibberellin A53 + 2 2-oxoglutarate + 3 O2 + H(+) = gibberellin A20 + 2 succinate + 3 CO2 + 2 H2O. Key oxidase enzyme in the biosynthesis of gibberellin. Catalyzes the formation of bioactive gibberellins (GAs) via a three-step oxidation at C-20 of the GA skeleton. Controls the elongation of the vegetative shoot and plant height by the regulation of active gibberellin levels. The polypeptide is Gibberellin 20 oxidase 3 (Oryza sativa subsp. japonica (Rice)).